The sequence spans 237 residues: Lectin alpha chain (237 aa).

Glutamate 8 and aspartate 10 together coordinate Mn(2+). 4 residues coordinate Ca(2+): aspartate 10, tyrosine 12, asparagine 14, and aspartate 19. Tyrosine 12 lines the a carbohydrate pocket. 3 residues coordinate Mn(2+): aspartate 19, histidine 24, and serine 34. Leucine 99–tyrosine 100 contacts a carbohydrate. Aspartate 208 contributes to the Ca(2+) binding site. Position 228 (arginine 228) interacts with a carbohydrate.

Belongs to the leguminous lectin family. Equilibrium between homodimer and homotetramer. Oligomerization is pH-dependent with homotetramers forming at pH 6.5 and above. Post-translationally, the beta and gamma chains are produced by partial proteolytic processing of the lectin alpha chain by an asparaginyl endopeptidase. Mixture of 60% alpha lectin and 40% of its beta and gamma proteolytic fragments.

Its function is as follows. D-mannose/D-glucose-binding lectin. Has anti-inflammatory activity in rats. Induces histamine release in mast cells from rat. Induces lymphocyte proliferation and IFNG production. In Dioclea guianensis, this protein is Lectin alpha chain.